The following is a 565-amino-acid chain: Wee1-like protein kinase 2 (565 aa).

Disordered regions lie at residues 18 to 78 (YCEE…KSPE) and 169 to 191 (KSNG…GNVE). The span at 19-29 (CEEESESEGQE) shows a compositional bias: acidic residues. Residues 31 to 51 (WETRDAHSQIPDRAEGQESEA) are compositionally biased toward basic and acidic residues. Ser76 carries the post-translational modification Phosphoserine. Residues 173 to 175 (KRK) carry the Nuclear localization signal motif. A Protein kinase domain is found at 214–492 (FLEVEKIGVG…ARSRVLRPSL (279 aa)). Residues 220 to 228 (IGVGEFGTV) and Lys243 contribute to the ATP site. The Nuclear export signal signature appears at 317–331 (KLKDILLQISLGLKY). Asp341 serves as the catalytic Proton acceptor. Residues Asn346 and Asp382 each coordinate Mg(2+). Residues 495-521 (AEELQQQLNLEKFKTATLERELREAQQ) are a coiled coil. The disordered stretch occupies residues 521 to 565 (QAWFSQEERGDAGVSGTPTGSRSTKRLVGGKSAKSSSFTWGKSSP). The segment covering 553–565 (AKSSSFTWGKSSP) has biased composition (polar residues).

Belongs to the protein kinase superfamily. Ser/Thr protein kinase family. WEE1 subfamily. Post-translationally, phosphorylation leads to increase its activity.

The protein resides in the nucleus. It carries out the reaction L-tyrosyl-[protein] + ATP = O-phospho-L-tyrosyl-[protein] + ADP + H(+). Oocyte-specific protein tyrosine kinase that phosphorylates and inhibits CDK1 and acts as a key regulator of meiosis during both prophase I and metaphase II. Required to maintain meiotic arrest in oocytes during the germinal vesicle (GV) stage, a long period of quiescence at dictyate prophase I, by phosphorylating CDK1 at 'Tyr-15', leading to inhibit CDK1 activity and prevent meiotic reentry. Also required for metaphase II exit during egg activation by phosphorylating CDK1 at 'Tyr-15', to ensure exit from meiosis in oocytes and promote pronuclear formation. The chain is Wee1-like protein kinase 2 (WEE2) from Ailuropoda melanoleuca (Giant panda).